A 223-amino-acid chain; its full sequence is Large ribosomal subunit protein uL3 (223 aa).

The protein belongs to the universal ribosomal protein uL3 family. In terms of assembly, part of the 50S ribosomal subunit. Forms a cluster with proteins L14 and L19.

Functionally, one of the primary rRNA binding proteins, it binds directly near the 3'-end of the 23S rRNA, where it nucleates assembly of the 50S subunit. The protein is Large ribosomal subunit protein uL3 of Nocardioides sp. (strain ATCC BAA-499 / JS614).